The sequence spans 229 residues: UPF0441 protein YE3666 (229 aa).

2 disordered regions span residues 101 to 125 and 190 to 229; these read PAQA…QQSG and KPAV…SMGG. 2 stretches are compositionally biased toward low complexity: residues 109–120 and 214–229; these read TSSSSSETTAAA and RSAA…SMGG.

This sequence belongs to the UPF0441 family.

The polypeptide is UPF0441 protein YE3666 (Yersinia enterocolitica serotype O:8 / biotype 1B (strain NCTC 13174 / 8081)).